The following is a 333-amino-acid chain: Holliday junction branch migration complex subunit RuvB (333 aa).

The interval 1–182 (MDERLLSGES…FGVLSRLEYY (182 aa)) is large ATPase domain (RuvB-L). Residues L21, R22, G63, K66, T67, T68, 129 to 131 (EDF), R172, Y182, and R219 each bind ATP. Residue T67 coordinates Mg(2+). Positions 183-253 (TVDQLSAIVE…ITQMALELLQ (71 aa)) are small ATPAse domain (RuvB-S). The head domain (RuvB-H) stretch occupies residues 256-333 (KLGLDHIDHK…EHFGMEMPKV (78 aa)). DNA contacts are provided by R311 and R316.

The protein belongs to the RuvB family. As to quaternary structure, homohexamer. Forms an RuvA(8)-RuvB(12)-Holliday junction (HJ) complex. HJ DNA is sandwiched between 2 RuvA tetramers; dsDNA enters through RuvA and exits via RuvB. An RuvB hexamer assembles on each DNA strand where it exits the tetramer. Each RuvB hexamer is contacted by two RuvA subunits (via domain III) on 2 adjacent RuvB subunits; this complex drives branch migration. In the full resolvosome a probable DNA-RuvA(4)-RuvB(12)-RuvC(2) complex forms which resolves the HJ.

The protein resides in the cytoplasm. It catalyses the reaction ATP + H2O = ADP + phosphate + H(+). Its function is as follows. The RuvA-RuvB-RuvC complex processes Holliday junction (HJ) DNA during genetic recombination and DNA repair, while the RuvA-RuvB complex plays an important role in the rescue of blocked DNA replication forks via replication fork reversal (RFR). RuvA specifically binds to HJ cruciform DNA, conferring on it an open structure. The RuvB hexamer acts as an ATP-dependent pump, pulling dsDNA into and through the RuvAB complex. RuvB forms 2 homohexamers on either side of HJ DNA bound by 1 or 2 RuvA tetramers; 4 subunits per hexamer contact DNA at a time. Coordinated motions by a converter formed by DNA-disengaged RuvB subunits stimulates ATP hydrolysis and nucleotide exchange. Immobilization of the converter enables RuvB to convert the ATP-contained energy into a lever motion, pulling 2 nucleotides of DNA out of the RuvA tetramer per ATP hydrolyzed, thus driving DNA branch migration. The RuvB motors rotate together with the DNA substrate, which together with the progressing nucleotide cycle form the mechanistic basis for DNA recombination by continuous HJ branch migration. Branch migration allows RuvC to scan DNA until it finds its consensus sequence, where it cleaves and resolves cruciform DNA. This Bacillus mycoides (strain KBAB4) (Bacillus weihenstephanensis) protein is Holliday junction branch migration complex subunit RuvB.